A 632-amino-acid polypeptide reads, in one-letter code: DNA mismatch repair protein MutL (632 aa).

This sequence belongs to the DNA mismatch repair MutL/HexB family.

In terms of biological role, this protein is involved in the repair of mismatches in DNA. It is required for dam-dependent methyl-directed DNA mismatch repair. May act as a 'molecular matchmaker', a protein that promotes the formation of a stable complex between two or more DNA-binding proteins in an ATP-dependent manner without itself being part of a final effector complex. This Pseudomonas putida (strain GB-1) protein is DNA mismatch repair protein MutL.